We begin with the raw amino-acid sequence, 32 residues long: Coenzyme PQQ synthesis protein A (32 aa).

The pyrroloquinoline quinone (Glu-Tyr) cross-link spans 16-20 (EINMY).

The protein belongs to the PqqA family.

It participates in cofactor biosynthesis; pyrroloquinoline quinone biosynthesis. In terms of biological role, required for coenzyme pyrroloquinoline quinone (PQQ) biosynthesis. PQQ is probably formed by cross-linking a specific glutamate to a specific tyrosine residue and excising these residues from the peptide. The polypeptide is Coenzyme PQQ synthesis protein A (Dinoroseobacter shibae (strain DSM 16493 / NCIMB 14021 / DFL 12)).